Consider the following 946-residue polypeptide: Leucine--tRNA ligase (946 aa).

A 'HIGH' region motif is present at residues Pro-43 to His-53. The 'KMSKS' region motif lies at Lys-638–Ser-642. Lys-641 provides a ligand contact to ATP.

The protein belongs to the class-I aminoacyl-tRNA synthetase family.

It is found in the cytoplasm. The catalysed reaction is tRNA(Leu) + L-leucine + ATP = L-leucyl-tRNA(Leu) + AMP + diphosphate. The sequence is that of Leucine--tRNA ligase from Pyrobaculum calidifontis (strain DSM 21063 / JCM 11548 / VA1).